The following is a 977-amino-acid chain: Alanine--tRNA ligase (977 aa).

The interval 512–535 (SQVDSKLQSSTPAGTGSYDSKQVS) is disordered. Residues His-618, His-622, Cys-720, and His-724 each coordinate Zn(2+).

This sequence belongs to the class-II aminoacyl-tRNA synthetase family. The cofactor is Zn(2+).

The protein resides in the cytoplasm. The enzyme catalyses tRNA(Ala) + L-alanine + ATP = L-alanyl-tRNA(Ala) + AMP + diphosphate. In terms of biological role, catalyzes the attachment of alanine to tRNA(Ala) in a two-step reaction: alanine is first activated by ATP to form Ala-AMP and then transferred to the acceptor end of tRNA(Ala). Also edits incorrectly charged Ser-tRNA(Ala) and Gly-tRNA(Ala) via its editing domain. The chain is Alanine--tRNA ligase from Leptospira interrogans serogroup Icterohaemorrhagiae serovar Lai (strain 56601).